The primary structure comprises 141 residues: Putative lipoprotein Tanf_09445 (141 aa).

A signal peptide spans 1–20; sequence MKQKIILWIGALLLLTAGTG. Cys-21 carries the N-palmitoyl cysteine lipid modification. Cys-21 is lipidated: S-diacylglycerol cysteine.

Its subcellular location is the cell membrane. The polypeptide is Putative lipoprotein Tanf_09445 (Tannerella forsythia (strain ATCC 43037 / JCM 10827 / CCUG 21028 A / KCTC 5666 / FDC 338) (Bacteroides forsythus)).